Here is a 268-residue protein sequence, read N- to C-terminus: Glutamate racemase (268 aa).

Substrate contacts are provided by residues 9–10 and 41–42; these read DS and YG. Catalysis depends on Cys73, which acts as the Proton donor/acceptor. Position 74–75 (74–75) interacts with substrate; it reads NS. The active-site Proton donor/acceptor is Cys183. Substrate is bound at residue 184–185; sequence TH.

This sequence belongs to the aspartate/glutamate racemases family.

The enzyme catalyses L-glutamate = D-glutamate. It participates in cell wall biogenesis; peptidoglycan biosynthesis. In terms of biological role, provides the (R)-glutamate required for cell wall biosynthesis. In Shewanella piezotolerans (strain WP3 / JCM 13877), this protein is Glutamate racemase.